Consider the following 150-residue polypeptide: Deoxyuridine 5'-triphosphate nucleotidohydrolase (150 aa).

Residues 69-71 (RSG), asparagine 82, and 86-88 (TID) each bind substrate.

The protein belongs to the dUTPase family. Requires Mg(2+) as cofactor.

It carries out the reaction dUTP + H2O = dUMP + diphosphate + H(+). It participates in pyrimidine metabolism; dUMP biosynthesis; dUMP from dCTP (dUTP route): step 2/2. In terms of biological role, this enzyme is involved in nucleotide metabolism: it produces dUMP, the immediate precursor of thymidine nucleotides and it decreases the intracellular concentration of dUTP so that uracil cannot be incorporated into DNA. This chain is Deoxyuridine 5'-triphosphate nucleotidohydrolase, found in Syntrophus aciditrophicus (strain SB).